Consider the following 427-residue polypeptide: Adenylosuccinate synthetase (427 aa).

GTP-binding positions include 12 to 18 and 40 to 42; these read GDEGKGK and GHT. Residue aspartate 13 is the Proton acceptor of the active site. Mg(2+)-binding residues include aspartate 13 and glycine 40. IMP contacts are provided by residues 13–16, 38–41, threonine 126, arginine 140, glutamine 221, threonine 236, and arginine 299; these read DEGK and NAGH. Catalysis depends on histidine 41, which acts as the Proton donor. 295 to 301 lines the substrate pocket; that stretch reads STTKRPR. Residues arginine 301, 327–329, and 409–411 each bind GTP; these read KLD and SVG.

The protein belongs to the adenylosuccinate synthetase family. As to quaternary structure, homodimer. It depends on Mg(2+) as a cofactor.

Its subcellular location is the cytoplasm. It catalyses the reaction IMP + L-aspartate + GTP = N(6)-(1,2-dicarboxyethyl)-AMP + GDP + phosphate + 2 H(+). It participates in purine metabolism; AMP biosynthesis via de novo pathway; AMP from IMP: step 1/2. In terms of biological role, plays an important role in the de novo pathway of purine nucleotide biosynthesis. Catalyzes the first committed step in the biosynthesis of AMP from IMP. The chain is Adenylosuccinate synthetase from Borrelia recurrentis (strain A1).